Consider the following 428-residue polypeptide: Serine--tRNA ligase (428 aa).

Position 231-233 (231-233 (TSE)) interacts with L-serine. ATP contacts are provided by residues 262 to 264 (RRE) and Val-278. Glu-285 is an L-serine binding site. 349–352 (ELTS) is a binding site for ATP. Thr-384 contributes to the L-serine binding site.

This sequence belongs to the class-II aminoacyl-tRNA synthetase family. Type-1 seryl-tRNA synthetase subfamily. Homodimer. The tRNA molecule binds across the dimer.

The protein resides in the cytoplasm. The catalysed reaction is tRNA(Ser) + L-serine + ATP = L-seryl-tRNA(Ser) + AMP + diphosphate + H(+). It carries out the reaction tRNA(Sec) + L-serine + ATP = L-seryl-tRNA(Sec) + AMP + diphosphate + H(+). The protein operates within aminoacyl-tRNA biosynthesis; selenocysteinyl-tRNA(Sec) biosynthesis; L-seryl-tRNA(Sec) from L-serine and tRNA(Sec): step 1/1. Its function is as follows. Catalyzes the attachment of serine to tRNA(Ser). Is also able to aminoacylate tRNA(Sec) with serine, to form the misacylated tRNA L-seryl-tRNA(Sec), which will be further converted into selenocysteinyl-tRNA(Sec). The chain is Serine--tRNA ligase from Bifidobacterium animalis subsp. lactis (strain AD011).